Reading from the N-terminus, the 361-residue chain is Alcohol dehydrogenase 9 (361 aa).

Zn(2+) contacts are provided by Cys-51, Thr-53, His-73, Cys-104, Cys-107, Cys-110, Cys-118, and Cys-167. An alcohol contacts are provided by Thr-53 and His-73. Thr-53 is an NAD(+) binding site. Residues 192 to 197 (GLGGLG), Lys-221, 278 to 280 (LGA), and Lys-356 each bind NAD(+).

The protein belongs to the zinc-containing alcohol dehydrogenase family. Class-III subfamily. Homodimer. Requires Zn(2+) as cofactor.

This Catharanthus roseus (Madagascar periwinkle) protein is Alcohol dehydrogenase 9.